We begin with the raw amino-acid sequence, 299 residues long: Taste receptor type 2 member 42 (299 aa).

The Extracellular segment spans residues 1 to 7; the sequence is MATELDK. The chain crosses the membrane as a helical span at residues 8-28; it reads IFLILAIAEFIISMLGNVFIG. The Cytoplasmic segment spans residues 29–50; the sequence is LVNCSEGIKNQKVFSSDFILTS. The helical transmembrane segment at 51–71 threads the bilayer; sequence LAISTIGQLLVILFDSFLVGL. At 72 to 101 the chain is on the extracellular side; that stretch reads ASHLYTTYRLGKPVIMLWHMTNHLTTWLAT. Residues 102–122 form a helical membrane-spanning segment; that stretch reads CLSVFYFFKIAHFPHSLFLWL. Over 123–127 the chain is Cytoplasmic; it reads RWRMN. The helical transmembrane segment at 128–148 threads the bilayer; that stretch reads GMIAMLLILSLFLLIFDSSVL. Residues 149–187 are Extracellular-facing; sequence EIFIDISLNIIDKSSLTLYLDESKTLYDKLSILKTLLSL. Residues 188 to 208 form a helical membrane-spanning segment; it reads TSFIPFSLSLTSVLFLYLSLV. Residues 209 to 238 lie on the Cytoplasmic side of the membrane; it reads RHTRNLKLSSLGSRDSSTEAHRRAMKMVMS. The helical transmembrane segment at 239 to 259 threads the bilayer; sequence FLFLFIVHFFSLQVANWIFFM. Residues 260 to 265 are Extracellular-facing; that stretch reads LWNNKY. The chain crosses the membrane as a helical span at residues 266 to 286; the sequence is IKFVMLALNAFPSCHSFILIL. Residues 287–299 are Cytoplasmic-facing; sequence GNSKLRQTAVRLL.

Belongs to the G-protein coupled receptor T2R family.

Its subcellular location is the membrane. Its function is as follows. Receptor that may play a role in the perception of bitterness and is gustducin-linked. May play a role in sensing the chemical composition of the gastrointestinal content. The activity of this receptor may stimulate alpha gustducin, mediate PLC-beta-2 activation and lead to the gating of TRPM5. This is Taste receptor type 2 member 42 (TAS2R42) from Gorilla gorilla gorilla (Western lowland gorilla).